Here is a 575-residue protein sequence, read N- to C-terminus: Developmental and secondary metabolism regulator VEL1 (575 aa).

Residues 21-225 (GRKLKYTLTV…AEQGCRVRIR (205 aa)) enclose the Velvet domain. Residues 35–40 (ERARAC) carry the Nuclear localization signal motif. Disordered regions lie at residues 36-56 (RARACGSGAKSSADRRPVDPP) and 227-402 (DVRM…QSYE). Residues 274-284 (VHEDPQQRRGS) are compositionally biased toward basic and acidic residues. Residues 294–308 (VVNTPFRTPSISPST) show a composition bias toward polar residues. Residues 334 to 346 (IQPPHPPPPPPSS) show a composition bias toward pro residues. Polar residues-rich tracts occupy residues 355 to 365 (HHNQGPSTQFR) and 385 to 402 (SYSQFRPPTNPSQQQSYE). Positions 465 to 509 (AEQPLAMSPLASVTSISRGTQNSAPMPSHNYNKLERSGSYSQYAP) are PEST. Positions 513-549 (EAPKSTNKRSFNDVFSTPTESLSNGRRPSAIGIDIEE) are disordered. Over residues 516 to 538 (KSTNKRSFNDVFSTPTESLSNGR) the composition is skewed to polar residues.

Belongs to the velvet family. VeA subfamily. In terms of assembly, component of the heterotrimeric velvet complex composed of LAE1, VEL1 and VEL2; VEL1 acting as a bridging protein between LAE1 and VEL2.

It localises to the nucleus. The protein resides in the cytoplasm. Functionally, component of the velvet transcription factor complex that controls sexual/asexual developmental ratio in response to light, promoting sexual development in the darkness while stimulating asexual sporulation under illumination. The velvet complex hat acts as a global regulator for secondary metabolite gene expression. Controls the expression of the oxalic acid and melanin gene clusters. Also controls the expression of proteases and carbohydrate-active enzymes. Involved in the resistance to oxidative stress. Required for full virulence. This Botryotinia fuckeliana (strain B05.10) (Noble rot fungus) protein is Developmental and secondary metabolism regulator VEL1.